The sequence spans 524 residues: Cytochrome c nitrite reductase subunit NrfA (524 aa).

Residues 1 to 24 (MNNQKTFKGLRLAALGLVAVAAFT) form the signal peptide. Residues 29–39 (DVSTELKTPVY) are interaction with NrfH. Residues G78, E117, and A118 each contribute to the Ca(2+) site. Heme-binding residues include H121, C147, C150, K151, C187, C190, and H191. The interaction with NrfH stretch occupies residues 221 to 222 (RN). C229, C232, and H233 together coordinate heme. Residues E235, Y236, K295, and Q297 each coordinate Ca(2+). Positions 309, 316, 319, 320, 335, 349, 352, 353, and 434 each coordinate heme. The interaction with NrfH stretch occupies residues 318 to 331 (DCHMSYTRSDDKKK). The segment at 351-355 (QCHSD) is interaction with NrfH.

It belongs to the cytochrome c-552 family. As to quaternary structure, component of the NrfHA cytochrome c nitrite reductase complex composed of 4 NrfA catalytic subunits and 2 NrfH quinone-binding subunits. NrfA homodimer interacts with NrfH. Ca(2+) is required as a cofactor. Requires heme as cofactor.

The protein resides in the cell inner membrane. The enzyme catalyses 6 Fe(III)-[cytochrome c] + NH4(+) + 2 H2O = 6 Fe(II)-[cytochrome c] + nitrite + 8 H(+). Catalytic subunit of the cytochrome c nitrite reductase holocomplex NrfHA. Has both nitrite and sulfite reductase activities. Catalyzes the reduction of nitrite to ammonia, consuming six electrons acquired by the electron donor subunit NrfH from the menaquinone pool, in an anaerobic respiratory process of nitrite. The other biological function of the NrfHA holocomplex is to detoxify nitrite. This function is essential for the survival of this organism as it enables it to overcome inhibition by nitrite, which is produced by other organisms living in the same environment. The chain is Cytochrome c nitrite reductase subunit NrfA from Nitratidesulfovibrio vulgaris (strain ATCC 29579 / DSM 644 / CCUG 34227 / NCIMB 8303 / VKM B-1760 / Hildenborough) (Desulfovibrio vulgaris).